We begin with the raw amino-acid sequence, 752 residues long: Primary amine oxidase (752 aa).

An N-terminal signal peptide occupies residues 1 to 27; it reads MAILSPRKTALALAVALSCAWQSPAFA. Substrate contacts are provided by residues 408 to 419 and 490 to 495; these read YLDSGDYGMGTL and VGNYDY. Catalysis depends on Asp-410, which acts as the Proton acceptor. Tyr-493 functions as the Schiff-base intermediate with substrate; via topaquinone in the catalytic mechanism. A 2',4',5'-topaquinone modification is found at Tyr-493. The Cu cation site is built by His-551 and His-553. Asp-560, Leu-561, Asp-562, Glu-600, Tyr-694, Asp-697, Glu-699, and Asp-705 together coordinate Ca(2+). Asp-560 contacts Mn(2+). Asp-562 is a Mn(2+) binding site. Asp-705 is a binding site for Mn(2+). His-716 contacts Cu cation.

This sequence belongs to the copper/topaquinone oxidase family. In terms of assembly, homodimer. Cu cation serves as cofactor. Requires Ca(2+) as cofactor. L-topaquinone is required as a cofactor. The cofactor is Mn(2+). Topaquinone (TPQ) is generated by copper-dependent autoxidation of a specific tyrosyl residue.

The protein resides in the periplasm. It carries out the reaction a primary methyl amine + O2 + H2O = an aldehyde + H2O2 + NH4(+). Active on tyramine, tryptamine, beta-phenethylamine and dopamine. In Klebsiella michiganensis (strain ATCC 8724 / DSM 4798 / JCM 20051 / NBRC 3318 / NRRL B-199 / KCTC 1686 / BUCSAV 143 / CCM 1901), this protein is Primary amine oxidase (maoA).